Consider the following 540-residue polypeptide: Beta-glucosidase 1B (540 aa).

3 residues coordinate substrate: Gln25, His128, and Asn174. Glu175 acts as the Proton donor in catalysis. Residue Tyr316 coordinates substrate. Catalysis depends on Glu380, which acts as the Nucleophile. Substrate contacts are provided by residues Trp430 and 437-438; that span reads EW. Residues 481–492 are compositionally biased toward low complexity; that stretch reads PAAETKKAATPS. Residues 481–524 form a disordered region; the sequence is PAAETKKAATPSPLKPHGAISNGVSKKSSATKEPKSASRKKGRK.

Belongs to the glycosyl hydrolase 1 family.

It catalyses the reaction Hydrolysis of terminal, non-reducing beta-D-glucosyl residues with release of beta-D-glucose.. Its function is as follows. Plays an important role in cellulose degradation. Shows hydrolytic activity against several glycosidic compounds. This chain is Beta-glucosidase 1B, found in Phanerodontia chrysosporium (White-rot fungus).